Here is a 257-residue protein sequence, read N- to C-terminus: Isoprenyl transferase (257 aa).

Residue D34 is part of the active site. D34 serves as a coordination point for Mg(2+). Residues 35 to 38, W39, R47, H51, and 79 to 81 each bind substrate; these read GNGR and STE. N82 functions as the Proton acceptor in the catalytic mechanism. Substrate contacts are provided by residues W83, R85, R202, and 208–210; that span reads RLS. E221 provides a ligand contact to Mg(2+).

The protein belongs to the UPP synthase family. Homodimer. Mg(2+) serves as cofactor.

Catalyzes the condensation of isopentenyl diphosphate (IPP) with allylic pyrophosphates generating different type of terpenoids. This Geobacillus kaustophilus (strain HTA426) protein is Isoprenyl transferase.